Consider the following 72-residue polypeptide: Translation initiation factor IF-1 (72 aa).

In terms of domain architecture, S1-like spans 1 to 72; the sequence is MTKEEVLEFP…TKGRITYRFK (72 aa).

This sequence belongs to the IF-1 family. As to quaternary structure, component of the 30S ribosomal translation pre-initiation complex which assembles on the 30S ribosome in the order IF-2 and IF-3, IF-1 and N-formylmethionyl-tRNA(fMet); mRNA recruitment can occur at any time during PIC assembly.

It localises to the cytoplasm. Its function is as follows. One of the essential components for the initiation of protein synthesis. Stabilizes the binding of IF-2 and IF-3 on the 30S subunit to which N-formylmethionyl-tRNA(fMet) subsequently binds. Helps modulate mRNA selection, yielding the 30S pre-initiation complex (PIC). Upon addition of the 50S ribosomal subunit IF-1, IF-2 and IF-3 are released leaving the mature 70S translation initiation complex. The sequence is that of Translation initiation factor IF-1 from Agrobacterium fabrum (strain C58 / ATCC 33970) (Agrobacterium tumefaciens (strain C58)).